Consider the following 636-residue polypeptide: Autophagy-related protein 20 (636 aa).

Disordered regions lie at residues 1 to 68 (MQIN…QPHE) and 84 to 163 (NYMQ…EGKK). The segment covering 10–23 (NSVTHLENNSPSRL) has biased composition (polar residues). The span at 27 to 49 (KTVEEHKEHEPDLQTQSEMRRES) shows a compositional bias: basic and acidic residues. Polar residues predominate over residues 50-64 (NGSPKDTAVTNQNGD). Over residues 122-133 (NRRKNSKERRRS) the composition is skewed to basic residues. A PX domain is found at 160 to 305 (EGKKRAQILE…DFLDPNNKNW (146 aa)). A 1,2-diacyl-sn-glycero-3-phospho-(1D-myo-inositol-3-phosphate) contacts are provided by R196, S198, K222, and R271.

It belongs to the sorting nexin family.

It is found in the endosome membrane. The protein localises to the preautophagosomal structure membrane. In terms of biological role, required for cytoplasm to vacuole transport (Cvt), pexophagy and mitophagy. Also involved in endoplasmic reticulum-specific autophagic process and is essential for the survival of cells subjected to severe ER stress. Functions in protein retrieval from the endocytic pathway. This is Autophagy-related protein 20 (ATG20) from Kluyveromyces lactis (strain ATCC 8585 / CBS 2359 / DSM 70799 / NBRC 1267 / NRRL Y-1140 / WM37) (Yeast).